The primary structure comprises 234 residues: Large ribosomal subunit protein uL1 (234 aa).

This sequence belongs to the universal ribosomal protein uL1 family. In terms of assembly, part of the 50S ribosomal subunit.

In terms of biological role, binds directly to 23S rRNA. The L1 stalk is quite mobile in the ribosome, and is involved in E site tRNA release. Protein L1 is also a translational repressor protein, it controls the translation of the L11 operon by binding to its mRNA. The sequence is that of Large ribosomal subunit protein uL1 from Prochlorococcus marinus (strain MIT 9211).